The chain runs to 115 residues: Aspartate 1-decarboxylase (115 aa).

The active-site Schiff-base intermediate with substrate; via pyruvic acid is Ser-25. Position 25 is a pyruvic acid (Ser) (Ser-25). Thr-57 is a substrate binding site. Residue Tyr-58 is the Proton donor of the active site. 73-75 (GAA) provides a ligand contact to substrate.

The protein belongs to the PanD family. Heterooctamer of four alpha and four beta subunits. It depends on pyruvate as a cofactor. Post-translationally, is synthesized initially as an inactive proenzyme, which is activated by self-cleavage at a specific serine bond to produce a beta-subunit with a hydroxyl group at its C-terminus and an alpha-subunit with a pyruvoyl group at its N-terminus.

The protein localises to the cytoplasm. The enzyme catalyses L-aspartate + H(+) = beta-alanine + CO2. It participates in cofactor biosynthesis; (R)-pantothenate biosynthesis; beta-alanine from L-aspartate: step 1/1. Its function is as follows. Catalyzes the pyruvoyl-dependent decarboxylation of aspartate to produce beta-alanine. The sequence is that of Aspartate 1-decarboxylase from Kosmotoga olearia (strain ATCC BAA-1733 / DSM 21960 / TBF 19.5.1).